A 132-amino-acid chain; its full sequence is ATP synthase epsilon chain (132 aa).

Belongs to the ATPase epsilon chain family. F-type ATPases have 2 components, CF(1) - the catalytic core - and CF(0) - the membrane proton channel. CF(1) has five subunits: alpha(3), beta(3), gamma(1), delta(1), epsilon(1). CF(0) has three main subunits: a, b and c.

It is found in the cell inner membrane. Its function is as follows. Produces ATP from ADP in the presence of a proton gradient across the membrane. The protein is ATP synthase epsilon chain of Parvibaculum lavamentivorans (strain DS-1 / DSM 13023 / NCIMB 13966).